The sequence spans 697 residues: Protein arginine N-methyltransferase 7 (697 aa).

SAM-dependent MTase PRMT-type domains are found at residues 14-357 (QNTW…YSLW) and 366-697 (EQPA…EETK).

This sequence belongs to the class I-like SAM-binding methyltransferase superfamily. Protein arginine N-methyltransferase family. PRMT7 subfamily.

In terms of biological role, essential arginine methyltransferase that can both catalyze the formation of omega-N monomethylarginine (MMA) and symmetrical dimethylarginine (sDMA). Specifically mediates the symmetrical dimethylation of arginine residues in the small nuclear ribonucleoproteins SmD1 and SmD3. In Drosophila virilis (Fruit fly), this protein is Protein arginine N-methyltransferase 7 (Art7).